A 214-amino-acid polypeptide reads, in one-letter code: Histone H1.1 (214 aa).

A disordered region spans residues 1–43; that stretch reads MSETAPVPQPASVAPEKPAATKKTRKPAKAAVPRKKPAGPSVS. At Ser-2 the chain carries N-acetylserine. Ser-2 and Ser-12 each carry phosphoserine. An N6-acetyllysine modification is found at Lys-17. Residues 20-37 show a composition bias toward basic residues; sequence ATKKTRKPAKAAVPRKKP. Residue Lys-36 is modified to N6-(beta-hydroxybutyryl)lysine. The H15 domain maps to 38 to 111; that stretch reads AGPSVSELIV…GAAGSFKLNK (74 aa). Ser-43 carries the phosphoserine modification. The residue at position 54 (Lys-54) is an N6-(beta-hydroxybutyryl)lysine. At Arg-56 the chain carries Citrulline. Lys-66 bears the N6-(beta-hydroxybutyryl)lysine mark. Ser-67 carries the phosphoserine modification. Lys-77 carries the post-translational modification N6-acetyllysine. At Lys-87 the chain carries N6-(beta-hydroxybutyryl)lysine. Position 92 is an N6-(beta-hydroxybutyryl)lysine; alternate (Lys-92). Lys-92 is modified (N6-acetyllysine; alternate). The disordered stretch occupies residues 93-214; the sequence is GTLVQTKGTG…KPKKAAPKKK (122 aa). At Ser-106 the chain carries Phosphoserine. Lys-108 is modified (N6-(beta-hydroxybutyryl)lysine). A compositionally biased stretch (low complexity) spans 116 to 144; the sequence is KASTTKVTVKAKASGAAKKPKKTAGAAAK. N6-acetyllysine is present on Lys-121. Basic residues-rich tracts occupy residues 145–179 and 186–214; these read KTVK…KKVA and KAVK…PKKK. Thr-202 is modified (phosphothreonine).

Belongs to the histone H1/H5 family. Interacts with DFFB. Post-translationally, H1 histones are progressively phosphorylated during the cell cycle, becoming maximally phosphorylated during late G2 phase and M phase, and being dephosphorylated sharply thereafter. Citrullination at Arg-56 (H1R54ci) by PADI4 takes place within the DNA-binding site of H1 and results in its displacement from chromatin and global chromatin decondensation, thereby promoting pluripotency and stem cell maintenance.

It localises to the nucleus. The protein localises to the chromosome. Its function is as follows. H1 histones bind to linker DNA between nucleosomes forming the macromolecular structure known as the chromatin fiber. H1 histones are necessary for the condensation of nucleosome chains into higher-order structured fibers. Also acts as a regulator of individual gene transcription through chromatin remodeling. The protein is Histone H1.1 of Rattus norvegicus (Rat).